The primary structure comprises 710 residues: DNA-directed RNA polymerase III subunit RPC5 (710 aa).

A compositionally biased stretch (basic and acidic residues) spans 146 to 155 (DAKHREREAA). A disordered region spans residues 146-169 (DAKHREREAANEAGDSSQDEAEED). Residues S161 and S162 each carry the phosphoserine modification. A Glycyl lysine isopeptide (Lys-Gly) (interchain with G-Cter in SUMO2) cross-link involves residue K171. Residue S192 is modified to Phosphoserine. Residue Y224 is modified to Phosphotyrosine. K432 participates in a covalent cross-link: Glycyl lysine isopeptide (Lys-Gly) (interchain with G-Cter in SUMO2). A Glycyl lysine isopeptide (Lys-Gly) (interchain with G-Cter in SUMO1); alternate cross-link involves residue K498. A Glycyl lysine isopeptide (Lys-Gly) (interchain with G-Cter in SUMO2); alternate cross-link involves residue K498. Residues 498–526 (KEEPLSEEEADGAELEAEEEEPMDTAPST) form a disordered region. Residues 502 to 520 (LSEEEADGAELEAEEEEPM) show a composition bias toward acidic residues. Phosphoserine is present on S503. Positions 558 to 710 (NPVACELKAF…MWYLKGTVQS (153 aa)) are required for Pol III complex stability. K661 is covalently cross-linked (Glycyl lysine isopeptide (Lys-Gly) (interchain with G-Cter in SUMO2)).

In terms of assembly, component of the RNA polymerase III complex consisting of at least 17 subunits: a ten-subunit horseshoe-shaped catalytic core composed of POLR3A/RPC1, POLR3B/RPC2, POLR1C/RPAC1, POLR1D/RPAC2, POLR3K/RPC10, POLR2E/RPABC1, POLR2F/RPABC2, POLR2H/RPABC3, POLR2K/RPABC4 and POLR2L/RPABC5; the stalk composed of two subunits POLR3H/RPC8 and CRCP/RPC9, forming a structural mobile part that protrudes out of the core and functions primarily in transcription initiation; and additional subunits homologous to general transcription factors of the RNA polymerase II machinery, POLR3D/RPC4-POLR3E/RPC5 heterodimer and POLR3/CRPC3-POLR3F/RPC6-POLR3G/RPC7 heterotrimer.

The protein resides in the nucleus. DNA-dependent RNA polymerase catalyzes the transcription of DNA into RNA using the four ribonucleoside triphosphates as substrates. Specific peripheric component of RNA polymerase III (Pol III) which synthesizes small non-coding RNAs including 5S rRNA, snRNAs, tRNAs and miRNAs from at least 500 distinct genomic loci. Assembles with POLR3D/RPC4 forming a subcomplex that binds the Pol III core. Enables recruitment of Pol III at transcription initiation site and drives transcription initiation from both type 2 and type 3 DNA promoters. Required for efficient transcription termination and reinitiation. Plays a key role in sensing and limiting infection by intracellular bacteria and DNA viruses. Acts as a nuclear and cytosolic DNA sensor involved in innate immune response. Can sense non-self dsDNA that serves as template for transcription into dsRNA. The non-self RNA polymerase III transcripts, such as Epstein-Barr virus-encoded RNAs (EBERs) induce type I interferon and NF-kappa-B through the RIG-I pathway. The polypeptide is DNA-directed RNA polymerase III subunit RPC5 (Mus musculus (Mouse)).